Reading from the N-terminus, the 121-residue chain is D-ornithine 4,5-aminomutase subunit alpha (121 aa).

In terms of assembly, heterotetramer of 2 alpha (OraS) and 2 beta (OraE) subunits.

The catalysed reaction is D-ornithine = (2R,4S)-2,4-diaminopentanoate. With respect to regulation, increased activity in the presence of dithiothreitol (DTT) in vitro. Inhibited by 1 mM potassium phosphate and potassium chloride. Inhibited by L-alpha-ornithine, D,L-alpha-lysine, L-beta-lysine (50%-60%), L-alpha-lysine (26%) and by delta-amino-n-valeric acid to a lesser extent. Significant decrease in activity is observed in the presence of 0.2 mM p-chloromercuribenzoate, N-ethylmaleimide and also by 2 mM iodoacetate to a lesser extent but not inhibited by arsenite. In terms of biological role, component of a complex that catalyzes the reversible migration of the omega amino group of D-ornithine to C-4 to form (2R,4S)-2,4-diaminopentanoic acid. The role of OraS remains obscure; however, it seems to be required for a correct folding of the OraE subunit. The complex is active only on D-ornithine and 2,4-diaminopentanoic acid and not active on L-ornithine, L-beta-lysine, L-alpha-lysine or D-alpha-lysine. This Acetoanaerobium sticklandii (strain ATCC 12662 / DSM 519 / JCM 1433 / CCUG 9281 / NCIMB 10654 / HF) (Clostridium sticklandii) protein is D-ornithine 4,5-aminomutase subunit alpha (oraS).